The primary structure comprises 498 residues: Lycopene beta cyclase, chloroplastic/chromoplastic (498 aa).

The N-terminal 79 residues, 1–79 (MDTLLRTPNN…ELPMYDPSKG (79 aa)), are a transit peptide targeting the chloroplast and chromoplast. 84–112 (LAVVGGGPAGLAVAQQVSEAGLSVCSIDP) serves as a coordination point for NAD(+). The FLEET motif signature appears at 293–297 (FLEET).

This sequence belongs to the lycopene cyclase family. As to quaternary structure, monomer. The cofactor is FAD. NADPH is required as a cofactor.

It localises to the plastid. It is found in the chloroplast. The protein localises to the chromoplast. It catalyses the reaction a carotenoid psi-end group = a carotenoid beta-end derivative. The enzyme catalyses all-trans-lycopene = gamma-carotene. It carries out the reaction gamma-carotene = all-trans-beta-carotene. The catalysed reaction is all-trans-neurosporene = beta-zeacarotene. It catalyses the reaction beta-zeacarotene = 7,8-dihydro-beta-carotene. It functions in the pathway carotenoid biosynthesis; beta-carotene biosynthesis. Its pathway is carotenoid biosynthesis; beta-zeacarotene biosynthesis. Functionally, catalyzes the double cyclization reaction which converts lycopene to beta-carotene. Catalyzes the double cyclization reaction which converts neurosporene to 7,8-dihydro-beta-carotene. The polypeptide is Lycopene beta cyclase, chloroplastic/chromoplastic (Capsicum annuum (Capsicum pepper)).